Here is a 293-residue protein sequence, read N- to C-terminus: Porphobilinogen deaminase (293 aa).

Residue C235 is modified to S-(dipyrrolylmethanemethyl)cysteine.

This sequence belongs to the HMBS family. Monomer. It depends on dipyrromethane as a cofactor.

The enzyme catalyses 4 porphobilinogen + H2O = hydroxymethylbilane + 4 NH4(+). It participates in porphyrin-containing compound metabolism; protoporphyrin-IX biosynthesis; coproporphyrinogen-III from 5-aminolevulinate: step 2/4. Tetrapolymerization of the monopyrrole PBG into the hydroxymethylbilane pre-uroporphyrinogen in several discrete steps. The polypeptide is Porphobilinogen deaminase (Ruminiclostridium cellulolyticum (strain ATCC 35319 / DSM 5812 / JCM 6584 / H10) (Clostridium cellulolyticum)).